The sequence spans 201 residues: Recombination protein RecR (201 aa).

Residues 60–75 (CSCCGNVDTSDPCTIC) form a C4-type zinc finger. The 96-residue stretch at 83 to 178 (ATLIVVEDVS…RVTRLAHGVP (96 aa)) folds into the Toprim domain.

The protein belongs to the RecR family.

In terms of biological role, may play a role in DNA repair. It seems to be involved in an RecBC-independent recombinational process of DNA repair. It may act with RecF and RecO. The sequence is that of Recombination protein RecR from Brucella ovis (strain ATCC 25840 / 63/290 / NCTC 10512).